Here is a 331-residue protein sequence, read N- to C-terminus: ESX-3 secretion system protein EccE3 (331 aa).

The next 2 membrane-spanning stretches (helical) occupy residues 11–31 and 37–57; these read GRVTLVLLAVVPVALAYPWQS and LLGVAAAVVIGLFGFWRGLYF.

Belongs to the EccE family. As to quaternary structure, part of the ESX-3 / type VII secretion system (T7SS), which is composed of cytosolic and membrane components. The ESX-3 membrane complex is composed of EccB3, EccC3, EccD3 and EccE3.

It localises to the cell inner membrane. Part of the ESX-3 specialized secretion system, which is important for iron and zinc uptake or homeostasis. This Mycobacterium tuberculosis (strain CDC 1551 / Oshkosh) protein is ESX-3 secretion system protein EccE3.